The sequence spans 896 residues: Microsomal triglyceride transfer protein large subunit (896 aa).

The first 21 residues, 1–21, serve as a signal peptide directing secretion; the sequence is MILLAVLFLCFFSSYSASVKG. A Vitellogenin domain is found at 28–659; the sequence is LNNERLYKLT…IFQYIGKAEL (632 aa). C174 and C194 form a disulfide bridge.

Heterodimer; heterodimerizes with the protein disulfide isomerase (P4HB/PDI). Interacts with APOB. Interacts with PRAP1.

It localises to the endoplasmic reticulum. The protein localises to the golgi apparatus. It carries out the reaction a 1,2-diacyl-sn-glycero-3-phosphocholine(in) = a 1,2-diacyl-sn-glycero-3-phosphocholine(out). It catalyses the reaction a 1,2-diacyl-sn-glycero-3-phosphoethanolamine(in) = a 1,2-diacyl-sn-glycero-3-phosphoethanolamine(out). The enzyme catalyses a cholesterol ester(in) = a cholesterol ester(out). The catalysed reaction is a triacyl-sn-glycerol(in) = a triacyl-sn-glycerol(out). Catalyzes the transport of triglyceride, cholesteryl ester, and phospholipid between phospholipid surfaces. Required for the assembly and secretion of plasma lipoproteins that contain apolipoprotein B. May be involved in regulating cholesteryl ester biosynthesis in cells that produce lipoproteins. The protein is Microsomal triglyceride transfer protein large subunit (Mttp) of Rattus norvegicus (Rat).